A 191-amino-acid chain; its full sequence is Outer membrane lipoprotein DolP (191 aa).

Residues 1–18 (MKAFSPLAVLISALLLQG) form the signal peptide. Cys-19 carries the N-palmitoyl cysteine lipid modification. Residue Cys-19 is the site of S-diacylglycerol cysteine attachment. BON domains are found at residues 46–115 (DDGT…RQGQ) and 124–191 (NDTW…TYIK).

It belongs to the lipoprotein DolP family.

The protein resides in the cell outer membrane. In terms of biological role, plays an important role in maintaining outer membrane integrity. Contributes to virulence. This chain is Outer membrane lipoprotein DolP, found in Salmonella typhimurium (strain LT2 / SGSC1412 / ATCC 700720).